Consider the following 335-residue polypeptide: MPTPLALLLSAILIIGTYFAMPFWPFRKSNYDPRGKHCYITGGSSGLGKALAERLVKQGAHVTIVGRDSKKAEGVVEELKAIAAPGQIIQCIAADLTSPIASTNAIHAACKPHADQAPDYVYLCAGFSRPKLFVETTKQELKDGLDGVYWVSAYTAHEACQMMSKQRRTGKIIFVASFLSYVSFAGYSSYSPAKYALRGLSDALRSEMLLHNIDIHIFLPCGISGPGFDAENRTKPAVTKKIEEGDTPITPEVCAAALESGLKKGYYQITDNLVTEPIRLRSNGGVPTNNFLLDTLWLIVSSVGVPIWRMTADSAVRSFRAKVEKELEAKGYYVS.

The NADPH site is built by glycine 42, serine 44, serine 45, and glycine 46. The GXSXG signature appears at 42 to 46 (GGSSG). Leucine 47 is an NADP(+) binding site. The NADPH site is built by arginine 67, aspartate 68, lysine 71, aspartate 95, and leucine 96. Aspartate 95 serves as a coordination point for NADP(+). NADP(+) contacts are provided by tyrosine 190, lysine 194, and isoleucine 223. Tyrosine 190 functions as the Proton acceptor in the catalytic mechanism. Lysine 194 (lowers pKa of active site Tyr) is an active-site residue. The helical transmembrane segment at 288-308 (TNNFLLDTLWLIVSSVGVPIW) threads the bilayer.

It belongs to the short-chain dehydrogenases/reductases (SDR) family.

It localises to the endoplasmic reticulum membrane. The catalysed reaction is sphinganine + NADP(+) = 3-oxosphinganine + NADPH + H(+). It participates in lipid metabolism; sphingolipid metabolism. Catalyzes the reduction of 3'-oxosphinganine (3-ketodihydrosphingosine/KDS) to sphinganine (dihydrosphingosine/DHS), the second step of de novo sphingolipid biosynthesis. The protein is 3-ketodihydrosphingosine reductase TSC10 (TSC10) of Cryptococcus neoformans var. neoformans serotype D (strain B-3501A) (Filobasidiella neoformans).